A 305-amino-acid polypeptide reads, in one-letter code: Putative S-adenosyl-L-methionine-dependent methyltransferase MAB_4607c (305 aa).

Residues Asp128 and Asp155–Leu156 each bind S-adenosyl-L-methionine.

The protein belongs to the UPF0677 family.

Functionally, exhibits S-adenosyl-L-methionine-dependent methyltransferase activity. The protein is Putative S-adenosyl-L-methionine-dependent methyltransferase MAB_4607c of Mycobacteroides abscessus (strain ATCC 19977 / DSM 44196 / CCUG 20993 / CIP 104536 / JCM 13569 / NCTC 13031 / TMC 1543 / L948) (Mycobacterium abscessus).